Reading from the N-terminus, the 372-residue chain is Chaperone protein DnaJ (372 aa).

Positions 5–69 (DYYEVLGVDR…QKKARYDQFG (65 aa)) constitute a J domain. The CR-type zinc finger occupies 129–211 (GKETEIEIPR…CSGKGKVRKR (83 aa)). Positions 142, 145, 159, 162, 185, 188, 199, and 202 each coordinate Zn(2+). CXXCXGXG motif repeat units lie at residues 142-149 (CGTCHGSG), 159-166 (CSHCGGSG), 185-192 (CNYCEGTG), and 199-206 (CATCSGKG).

It belongs to the DnaJ family. In terms of assembly, homodimer. It depends on Zn(2+) as a cofactor.

The protein resides in the cytoplasm. Participates actively in the response to hyperosmotic and heat shock by preventing the aggregation of stress-denatured proteins and by disaggregating proteins, also in an autonomous, DnaK-independent fashion. Unfolded proteins bind initially to DnaJ; upon interaction with the DnaJ-bound protein, DnaK hydrolyzes its bound ATP, resulting in the formation of a stable complex. GrpE releases ADP from DnaK; ATP binding to DnaK triggers the release of the substrate protein, thus completing the reaction cycle. Several rounds of ATP-dependent interactions between DnaJ, DnaK and GrpE are required for fully efficient folding. Also involved, together with DnaK and GrpE, in the DNA replication of plasmids through activation of initiation proteins. The chain is Chaperone protein DnaJ from Shouchella clausii (strain KSM-K16) (Alkalihalobacillus clausii).